A 253-amino-acid polypeptide reads, in one-letter code: Ubiquinone biosynthesis O-methyltransferase (253 aa).

Arg47, Gly78, Asp99, and Met141 together coordinate S-adenosyl-L-methionine.

The protein belongs to the methyltransferase superfamily. UbiG/COQ3 family.

It carries out the reaction a 3-demethylubiquinol + S-adenosyl-L-methionine = a ubiquinol + S-adenosyl-L-homocysteine + H(+). It catalyses the reaction a 3-(all-trans-polyprenyl)benzene-1,2-diol + S-adenosyl-L-methionine = a 2-methoxy-6-(all-trans-polyprenyl)phenol + S-adenosyl-L-homocysteine + H(+). The protein operates within cofactor biosynthesis; ubiquinone biosynthesis. O-methyltransferase that catalyzes the 2 O-methylation steps in the ubiquinone biosynthetic pathway. This is Ubiquinone biosynthesis O-methyltransferase from Bradyrhizobium sp. (strain ORS 278).